A 309-amino-acid polypeptide reads, in one-letter code: UDP-N-acetylenolpyruvoylglucosamine reductase (309 aa).

Residues 24–187 enclose the FAD-binding PCMH-type domain; sequence RVGGPADWLF…TKAVFEAPRG (164 aa). Residue Arg167 is part of the active site. A compositionally biased stretch (basic and acidic residues) spans 200-213; it reads LARRDATQPTKERS. A disordered region spans residues 200–230; that stretch reads LARRDATQPTKERSAGSTFRNPAGFSSTGRS. Over residues 214 to 228 the composition is skewed to polar residues; that stretch reads AGSTFRNPAGFSSTG. Ser216 functions as the Proton donor in the catalytic mechanism. The active site involves Glu298.

Belongs to the MurB family. It depends on FAD as a cofactor.

The protein localises to the cytoplasm. It catalyses the reaction UDP-N-acetyl-alpha-D-muramate + NADP(+) = UDP-N-acetyl-3-O-(1-carboxyvinyl)-alpha-D-glucosamine + NADPH + H(+). It participates in cell wall biogenesis; peptidoglycan biosynthesis. In terms of biological role, cell wall formation. The chain is UDP-N-acetylenolpyruvoylglucosamine reductase from Roseobacter denitrificans (strain ATCC 33942 / OCh 114) (Erythrobacter sp. (strain OCh 114)).